A 341-amino-acid chain; its full sequence is MKIVNITTQVESIELKTPFKTALRQTSHVEFVRVEVECDNGFVGIGEASATKVITGEDIYIILTSIASVEELFLNLTCEEALGALHTKCAIGSSAKASLDIAFVHLLSQEAKKPLYEYFGATDKSALKSDITISLNEADVMLNDAKKAFSNGMDILKIKVGSDILHAIDIVRKIAKELPECDILVDANQAWSFENTVLFIENMLNTPIKLIEQPVEAPNLDGLKKITELSHIPILADEAVFTLKDAKKVIEEKCADMINIKLMKCGGVSKAIEILEFARNREFKCMLGSMLEGPYSINMALHLAFAYRDVIEFVDLDSPLLYKEMPKELDFVFDGCEIKPL.

Substrate contacts are provided by residues Thr-132 and 157 to 159 (KIK). Residues Asp-186, Glu-212, and Asp-237 each contribute to the Mg(2+) site. Substrate is bound by residues Lys-261 and 315–317 (DLD).

It belongs to the mandelate racemase/muconate lactonizing enzyme family. The cofactor is Mg(2+).

In terms of biological role, catalyzes the epimerization of dipeptides with L-Glu in the second position. Has epimerase activity with L-Gly-L-Glu, L-Ala-L-Glu, L-Ser-L-Glu, L-Pro-L-Glu, L-Val-L-Glu, L-Met-L-Glu, L-Thr-L-Glu and L-Phe-L-Glu (in vitro). The chain is L-amino acid-D/L-Glu epimerase from Sulfurimonas denitrificans (strain ATCC 33889 / DSM 1251) (Thiomicrospira denitrificans (strain ATCC 33889 / DSM 1251)).